Reading from the N-terminus, the 320-residue chain is tRNA U34 carboxymethyltransferase (320 aa).

Residues Lys-89, Trp-103, Lys-108, Gly-128, 150–152 (DPT), 179–180 (IE), Met-194, Tyr-198, and Arg-313 contribute to the carboxy-S-adenosyl-L-methionine site.

This sequence belongs to the class I-like SAM-binding methyltransferase superfamily. CmoB family. In terms of assembly, homotetramer.

It carries out the reaction carboxy-S-adenosyl-L-methionine + 5-hydroxyuridine(34) in tRNA = 5-carboxymethoxyuridine(34) in tRNA + S-adenosyl-L-homocysteine + H(+). Catalyzes carboxymethyl transfer from carboxy-S-adenosyl-L-methionine (Cx-SAM) to 5-hydroxyuridine (ho5U) to form 5-carboxymethoxyuridine (cmo5U) at position 34 in tRNAs. This Actinobacillus pleuropneumoniae serotype 7 (strain AP76) protein is tRNA U34 carboxymethyltransferase.